We begin with the raw amino-acid sequence, 199 residues long: uncharacterized protein (199 aa).

To M.jannaschii MJ1356.

This is an uncharacterized protein from Methanocaldococcus jannaschii (strain ATCC 43067 / DSM 2661 / JAL-1 / JCM 10045 / NBRC 100440) (Methanococcus jannaschii).